The following is a 223-amino-acid chain: Cytochrome c biogenesis ATP-binding export protein CcmA (223 aa).

An ABC transporter domain is found at L20–A222. G52–T59 serves as a coordination point for ATP.

Belongs to the ABC transporter superfamily. CcmA exporter (TC 3.A.1.107) family. As to quaternary structure, the complex is composed of two ATP-binding proteins (CcmA) and two transmembrane proteins (CcmB).

The protein resides in the cell inner membrane. The enzyme catalyses heme b(in) + ATP + H2O = heme b(out) + ADP + phosphate + H(+). Part of the ABC transporter complex CcmAB involved in the biogenesis of c-type cytochromes; once thought to export heme, this seems not to be the case, but its exact role is uncertain. Responsible for energy coupling to the transport system. In Xylella fastidiosa (strain 9a5c), this protein is Cytochrome c biogenesis ATP-binding export protein CcmA.